A 697-amino-acid polypeptide reads, in one-letter code: Disintegrin and metalloproteinase domain-containing protein 26A (697 aa).

A signal peptide spans 1-22 (MFLKFCLWTMFFFSAWSPIGHA). Positions 23-187 (KYSSLLEVVT…NAPTLLQIPY (165 aa)) are excised as a propeptide. N-linked (GlcNAc...) asparagine glycosylation occurs at Asn-127. The short motif at 159-166 (MRCGLSEE) is the Cysteine switch element. Cys-161 contacts Zn(2+). Residues 188-671 (ENWWTHHRFI…PPLPLSHSKW (484 aa)) lie on the Extracellular side of the membrane. One can recognise a Peptidase M12B domain in the interval 195 to 385 (RFIEYFVVLD…TKRSCLYDIP (191 aa)). Asn-214 is a glycosylation site (N-linked (GlcNAc...) asparagine). Intrachain disulfides connect Cys-305–Cys-380, Cys-344–Cys-366, and Cys-346–Cys-351. His-329 lines the Zn(2+) pocket. Glu-330 is a catalytic residue. Positions 333 and 339 each coordinate Zn(2+). N-linked (GlcNAc...) asparagine glycans are attached at residues Asn-365, Asn-391, Asn-464, Asn-506, Asn-531, and Asn-573. One can recognise a Disintegrin domain in the interval 392–478 (LTVCGNKVVE…ECPGDVYKAD (87 aa)). An intrachain disulfide couples Cys-450 to Cys-470. In terms of domain architecture, EGF-like spans 616 to 649 (LVSNCSPQLYHMQGICNNKQHCHCGVTWKPPDCQ). Intrachain disulfides connect Cys-620–Cys-631 and Cys-639–Cys-648. The helical transmembrane segment at 672-692 (IVYILIVLDVCIVIIIYLFSF) threads the bilayer. Over 693–697 (YKLSK) the chain is Cytoplasmic.

Zn(2+) is required as a cofactor. Expressed in sperm (at protein level). Expressed specifically in testis.

It is found in the membrane. In terms of biological role, sperm surface membrane protein that may be involved in spermatogenesis and fertilization. The protein is Disintegrin and metalloproteinase domain-containing protein 26A of Mus musculus (Mouse).